We begin with the raw amino-acid sequence, 430 residues long: Glutamate-1-semialdehyde 2,1-aminomutase (430 aa).

Lys265 carries the N6-(pyridoxal phosphate)lysine modification.

The protein belongs to the class-III pyridoxal-phosphate-dependent aminotransferase family. HemL subfamily. As to quaternary structure, homodimer. Pyridoxal 5'-phosphate serves as cofactor.

It localises to the cytoplasm. It catalyses the reaction (S)-4-amino-5-oxopentanoate = 5-aminolevulinate. Its pathway is porphyrin-containing compound metabolism; protoporphyrin-IX biosynthesis; 5-aminolevulinate from L-glutamyl-tRNA(Glu): step 2/2. This chain is Glutamate-1-semialdehyde 2,1-aminomutase, found in Shewanella sp. (strain MR-4).